Consider the following 427-residue polypeptide: Glutamate-1-semialdehyde 2,1-aminomutase (427 aa).

At Lys-265 the chain carries N6-(pyridoxal phosphate)lysine.

Belongs to the class-III pyridoxal-phosphate-dependent aminotransferase family. HemL subfamily. Homodimer. Requires pyridoxal 5'-phosphate as cofactor.

It is found in the cytoplasm. The catalysed reaction is (S)-4-amino-5-oxopentanoate = 5-aminolevulinate. The protein operates within porphyrin-containing compound metabolism; protoporphyrin-IX biosynthesis; 5-aminolevulinate from L-glutamyl-tRNA(Glu): step 2/2. In Neisseria meningitidis serogroup A / serotype 4A (strain DSM 15465 / Z2491), this protein is Glutamate-1-semialdehyde 2,1-aminomutase.